The following is a 280-amino-acid chain: Phosphatidylserine decarboxylase proenzyme (280 aa).

Active-site charge relay system; for autoendoproteolytic cleavage activity residues include Asp-90, His-146, and Ser-247. The active-site Schiff-base intermediate with substrate; via pyruvic acid; for decarboxylase activity is Ser-247. Ser-247 is subject to Pyruvic acid (Ser); by autocatalysis.

It belongs to the phosphatidylserine decarboxylase family. PSD-B subfamily. Prokaryotic type I sub-subfamily. In terms of assembly, heterodimer of a large membrane-associated beta subunit and a small pyruvoyl-containing alpha subunit. It depends on pyruvate as a cofactor. Is synthesized initially as an inactive proenzyme. Formation of the active enzyme involves a self-maturation process in which the active site pyruvoyl group is generated from an internal serine residue via an autocatalytic post-translational modification. Two non-identical subunits are generated from the proenzyme in this reaction, and the pyruvate is formed at the N-terminus of the alpha chain, which is derived from the carboxyl end of the proenzyme. The autoendoproteolytic cleavage occurs by a canonical serine protease mechanism, in which the side chain hydroxyl group of the serine supplies its oxygen atom to form the C-terminus of the beta chain, while the remainder of the serine residue undergoes an oxidative deamination to produce ammonia and the pyruvoyl prosthetic group on the alpha chain. During this reaction, the Ser that is part of the protease active site of the proenzyme becomes the pyruvoyl prosthetic group, which constitutes an essential element of the active site of the mature decarboxylase.

It is found in the cell membrane. The catalysed reaction is a 1,2-diacyl-sn-glycero-3-phospho-L-serine + H(+) = a 1,2-diacyl-sn-glycero-3-phosphoethanolamine + CO2. It functions in the pathway phospholipid metabolism; phosphatidylethanolamine biosynthesis; phosphatidylethanolamine from CDP-diacylglycerol: step 2/2. Its function is as follows. Catalyzes the formation of phosphatidylethanolamine (PtdEtn) from phosphatidylserine (PtdSer). The protein is Phosphatidylserine decarboxylase proenzyme of Myxococcus xanthus (strain DK1622).